Here is a 961-residue protein sequence, read N- to C-terminus: Lon protease homolog, mitochondrial (961 aa).

Residues 1 to 67 constitute a mitochondrion transit peptide; the sequence is MAGGTGCVRL…SPAAAGHWRG (67 aa). Disordered regions lie at residues 76-103 and 220-262; these read GGGA…GSAG and QLEV…VVVG. The 247-residue stretch at 125 to 371 folds into the Lon N-terminal domain; that stretch reads LPLIAVTRNP…KALSLLKKEF (247 aa). Basic residues predominate over residues 235–244; it reads KLRKKPKRGK. The span at 245–257 shows a compositional bias: basic and acidic residues; the sequence is KEAEEDGATKRPL. 524–531 is an ATP binding site; sequence GPPGVGKT. Positions 760–951 constitute a Lon proteolytic domain; the sequence is VTPPGVVMGL…REIFDIAFPE (192 aa). The segment covering 784–801 has biased composition (basic and acidic residues); that stretch reads SLRRPRDRDSDKGDKDGS. Residues 784–803 are disordered; sequence SLRRPRDRDSDKGDKDGSLE. Residues Ser857 and Lys900 contribute to the active site.

The protein belongs to the peptidase S16 family. Homohexamer. Organized in a ring with a central cavity. The ATP-binding and proteolytic domains (AP-domain) form a hexameric chamber, while the N-terminal domain is arranged as a trimer of dimers. DNA and RNA binding is stimulated by substrate and inhibited by ATP binding. Interacts with TWNK and mitochondrial DNA polymerase subunit POLG.

Its subcellular location is the mitochondrion matrix. The catalysed reaction is Hydrolysis of proteins in presence of ATP.. Functionally, ATP-dependent serine protease that mediates the selective degradation of misfolded, unassembled or oxidatively damaged polypeptides as well as certain short-lived regulatory proteins in the mitochondrial matrix. Endogenous substrates include mitochondrial steroidogenic acute regulatory (StAR) protein, DELE1, helicase Twinkle (TWNK) and the large ribosomal subunit protein MRPL32/bL32m. MRPL32/bL32m is protected from degradation by LONP1 when it is bound to a nucleic acid (RNA), but TWNK is not. May also have a chaperone function in the assembly of inner membrane protein complexes. Participates in the regulation of mitochondrial gene expression and in the maintenance of the integrity of the mitochondrial genome. Binds to mitochondrial promoters and RNA in a single-stranded, site-specific, and strand-specific manner. May regulate mitochondrial DNA replication and/or gene expression using site-specific, single-stranded DNA binding to target the degradation of regulatory proteins binding to adjacent sites in mitochondrial promoters. This Bos taurus (Bovine) protein is Lon protease homolog, mitochondrial.